We begin with the raw amino-acid sequence, 66 residues long: Toxin Boma6c (66 aa).

Positions 2–64 constitute an LCN-type CS-alpha/beta domain; sequence RDAYIAQNYN…VPIRIPGKCH (63 aa). Intrachain disulfides connect cysteine 12-cysteine 63, cysteine 16-cysteine 36, cysteine 22-cysteine 46, and cysteine 26-cysteine 48.

This sequence belongs to the long (4 C-C) scorpion toxin superfamily. Sodium channel inhibitor family. Alpha subfamily. As to expression, expressed by the venom gland.

It localises to the secreted. Functionally, alpha toxins bind voltage-independently at site-3 of sodium channels (Nav) and inhibit the inactivation of the activated channels, thereby blocking neuronal transmission. The chain is Toxin Boma6c from Buthus occitanus mardochei (Moroccan scorpion).